The primary structure comprises 440 residues: Murein DD-endopeptidase MepM (440 aa).

A helical transmembrane segment spans residues Val-21–Val-40. One can recognise a LysM domain in the interval His-96–Trp-141. A Zn(2+)-binding site is contributed by His-314.

It belongs to the peptidase M23B family. Requires Zn(2+) as cofactor.

It is found in the cell membrane. It participates in cell wall biogenesis; cell wall polysaccharide biosynthesis. A murein DD-endopeptidase with specificity for D-Ala-meso-diaminopimelic acid (mDAP) cross-links. Its role is probably to cleave D-Ala-mDAP cross-links to allow insertion of new glycans and thus cell wall expansion. Functionally redundant with MepM and MepH. This Escherichia coli O6:H1 (strain CFT073 / ATCC 700928 / UPEC) protein is Murein DD-endopeptidase MepM (mepM).